The primary structure comprises 102 residues: Small ribosomal subunit protein uS10 (102 aa).

This sequence belongs to the universal ribosomal protein uS10 family. In terms of assembly, part of the 30S ribosomal subunit.

Involved in the binding of tRNA to the ribosomes. In Dehalococcoides mccartyi (strain ATCC BAA-2266 / KCTC 15142 / 195) (Dehalococcoides ethenogenes (strain 195)), this protein is Small ribosomal subunit protein uS10.